A 793-amino-acid polypeptide reads, in one-letter code: Transcription factor opdR (793 aa).

Disordered stretches follow at residues 1 to 29 (MAQD…DPCR), 60 to 113 (TASS…QSQN), and 457 to 476 (LDDE…QPSE). The segment at residues 25-53 (CDPCRRRKVRCDRKFPCGQCERARTALQC) is a DNA-binding region (zn(2)-C6 fungal-type).

Its subcellular location is the nucleus. Transcription factor; part of the gene cluster that mediates the biosynthesis of oxopyrrolidines, polyketide-amino acid hybrid compounds with feature structures of tetramic acid. This is Transcription factor opdR from Penicillium oxalicum (strain 114-2 / CGMCC 5302) (Penicillium decumbens).